Reading from the N-terminus, the 217-residue chain is LSM12 homolog A (217 aa).

The Sm domain occupies Val9 to Cys78. Residues Gln86–Pro184 form the AD domain. A disordered region spans residues Ser185–Asn217. Low complexity predominate over residues Ser190–Asn217.

Belongs to the LSM12 family. Component of the Atx2-tyf activator complex, composed of Atx2, tyf, pAbp, Lsm12a. Interacts with tyf, Atx2 and pAbp.

Functionally, component of the Atx2-tyf activator complex which functions in the circadian pacemaker neurons to activate the TYF-dependent translation of per and maintain 24 hour periodicity in circadian behaviors. Within the Atx2-tyf complex, likely to function as a molecular adapter which stabilizes the interaction between Atx2 and the translational regulator tyf. The polypeptide is LSM12 homolog A (Drosophila melanogaster (Fruit fly)).